Reading from the N-terminus, the 192-residue chain is Ubiquitin-conjugating enzyme E2 T (192 aa).

Residues 2-152 enclose the UBC core domain; sequence QRVSRLKREL…AKKWTEKHAL (151 aa). Cys86 serves as the catalytic Glycyl thioester intermediate. The disordered stretch occupies residues 150 to 192; sequence HALPAPQGSDKESQEKSGSSEGTSHKRKSAEIAEESKKPCREP. A compositionally biased stretch (basic and acidic residues) spans 178–192; sequence SAEIAEESKKPCREP.

The protein belongs to the ubiquitin-conjugating enzyme family.

The protein resides in the nucleus. The enzyme catalyses S-ubiquitinyl-[E1 ubiquitin-activating enzyme]-L-cysteine + [E2 ubiquitin-conjugating enzyme]-L-cysteine = [E1 ubiquitin-activating enzyme]-L-cysteine + S-ubiquitinyl-[E2 ubiquitin-conjugating enzyme]-L-cysteine.. The protein operates within protein modification; protein ubiquitination. Functionally, accepts ubiquitin from the E1 complex and catalyzes its covalent attachment to other proteins. Catalyzes monoubiquitination. Involved in DNA repair. The protein is Ubiquitin-conjugating enzyme E2 T (ube2t) of Xenopus laevis (African clawed frog).